Consider the following 429-residue polypeptide: 3-phosphoshikimate 1-carboxyvinyltransferase (429 aa).

3-phosphoshikimate is bound by residues lysine 23, serine 24, and arginine 28. Lysine 23 provides a ligand contact to phosphoenolpyruvate. Glycine 97 and arginine 125 together coordinate phosphoenolpyruvate. 3-phosphoshikimate is bound by residues serine 170, serine 171, glutamine 172, serine 198, aspartate 314, asparagine 338, and lysine 342. Residue glutamine 172 coordinates phosphoenolpyruvate. The Proton acceptor role is filled by aspartate 314. The phosphoenolpyruvate site is built by arginine 346, arginine 388, and lysine 413.

Belongs to the EPSP synthase family. Monomer.

The protein localises to the cytoplasm. It catalyses the reaction 3-phosphoshikimate + phosphoenolpyruvate = 5-O-(1-carboxyvinyl)-3-phosphoshikimate + phosphate. The protein operates within metabolic intermediate biosynthesis; chorismate biosynthesis; chorismate from D-erythrose 4-phosphate and phosphoenolpyruvate: step 6/7. Catalyzes the transfer of the enolpyruvyl moiety of phosphoenolpyruvate (PEP) to the 5-hydroxyl of shikimate-3-phosphate (S3P) to produce enolpyruvyl shikimate-3-phosphate and inorganic phosphate. The sequence is that of 3-phosphoshikimate 1-carboxyvinyltransferase from Pectobacterium atrosepticum (strain SCRI 1043 / ATCC BAA-672) (Erwinia carotovora subsp. atroseptica).